A 1052-amino-acid chain; its full sequence is Eukaryotic translation initiation factor 3 subunit A (1052 aa).

Residues leucine 92–alanine 121 adopt a coiled-coil conformation. The PCI domain occupies methionine 339–phenylalanine 523. The stretch at glutamate 580 to threonine 906 forms a coiled coil. Basic and acidic residues-rich tracts occupy residues alanine 617–arginine 632 and lysine 794–arginine 901. Disordered regions lie at residues alanine 617–glutamine 646 and lysine 794–glutamine 1052. 2 stretches are compositionally biased toward low complexity: residues arginine 905–arginine 927 and lysine 948–glutamate 964. Residues glycine 1013–serine 1028 are compositionally biased toward polar residues.

This sequence belongs to the eIF-3 subunit A family. In terms of assembly, component of the eukaryotic translation initiation factor 3 (eIF-3) complex.

The protein resides in the cytoplasm. Functionally, RNA-binding component of the eukaryotic translation initiation factor 3 (eIF-3) complex, which is involved in protein synthesis of a specialized repertoire of mRNAs and, together with other initiation factors, stimulates binding of mRNA and methionyl-tRNAi to the 40S ribosome. The eIF-3 complex specifically targets and initiates translation of a subset of mRNAs involved in cell proliferation. This is Eukaryotic translation initiation factor 3 subunit A (tif32) from Aspergillus niger (strain ATCC MYA-4892 / CBS 513.88 / FGSC A1513).